The following is a 121-amino-acid chain: UPF0295 protein BH0952 (121 aa).

The next 2 membrane-spanning stretches (helical) occupy residues 12–32 (IRTF…IGIF) and 41–61 (VLAM…YFWI).

It belongs to the UPF0295 family.

It is found in the cell membrane. The polypeptide is UPF0295 protein BH0952 (Halalkalibacterium halodurans (strain ATCC BAA-125 / DSM 18197 / FERM 7344 / JCM 9153 / C-125) (Bacillus halodurans)).